The sequence spans 570 residues: Peptidyl-prolyl cis-trans isomerase CYP63 (570 aa).

Positions 10–174 (FLDVSIGGDP…SPVKIIDCGE (165 aa)) constitute a PPIase cyclophilin-type domain. The segment at 180 to 570 (AHDAAEREKG…GKRGLVSYAD (391 aa)) is disordered. Residues 203–219 (VSDREAKETRKKESNEK) show a composition bias toward basic and acidic residues. 2 stretches are compositionally biased toward low complexity: residues 229 to 238 (SSDSYSSSSD) and 246 to 259 (EAYS…SSSS). Basic residues predominate over residues 262 to 292 (KHRKRKSTTRHKGRRGERKSKGRSGKKKARP). Positions 297–309 (STNSSSDTESSSS) are enriched in low complexity. The segment covering 323–339 (VKVDNADQHANLDDSVK) has biased composition (basic and acidic residues). A Phosphoserine modification is found at S340. Residues 340-351 (SRSRSPIRRRNQ) show a composition bias toward basic residues. The span at 352–365 (NSRSKSPSRSPVRV) shows a compositional bias: low complexity. Basic and acidic residues-rich tracts occupy residues 387 to 397 (SPREKPTEETV) and 437 to 467 (SPPR…ERSP). The span at 468 to 490 (RGRFRSPPRRRSPPRYNRRRRST) shows a compositional bias: basic residues. Positions 495–505 (DGYRRRLRDGS) are enriched in basic and acidic residues. Residues 509 to 523 (SPRHRSRSQSPRKRQ) are compositionally biased toward basic residues. Residues 546 to 555 (SPAESLSPSH) show a composition bias toward low complexity.

It belongs to the cyclophilin-type PPIase family. As to quaternary structure, interacts with SNRNP35, RNU1, SCL28, SCL30, SR30 and SR34. The binding to SR34 is phosphorylation-dependent. In terms of tissue distribution, ubiquitous.

The protein localises to the nucleus. It localises to the nucleoplasm. It is found in the nucleus speckle. It carries out the reaction [protein]-peptidylproline (omega=180) = [protein]-peptidylproline (omega=0). PPIases accelerate the folding of proteins. It catalyzes the cis-trans isomerization of proline imidic peptide bonds in oligopeptides. May be implicated in the folding, transport, and assembly of proteins. Probably involved in early steps of spliceosomal assembly. The sequence is that of Peptidyl-prolyl cis-trans isomerase CYP63 (CYP63) from Arabidopsis thaliana (Mouse-ear cress).